We begin with the raw amino-acid sequence, 155 residues long: Ribonuclease HI (155 aa).

The region spanning 1–142 (MTKQVEIFTD…CDELARAAAE (142 aa)) is the RNase H type-1 domain. Mg(2+) is bound by residues aspartate 10, glutamate 48, aspartate 70, and aspartate 134.

The protein belongs to the RNase H family. Monomer. Mg(2+) is required as a cofactor.

The protein localises to the cytoplasm. It catalyses the reaction Endonucleolytic cleavage to 5'-phosphomonoester.. In terms of biological role, endonuclease that specifically degrades the RNA of RNA-DNA hybrids. This is Ribonuclease HI from Vibrio vulnificus (strain CMCP6).